Consider the following 280-residue polypeptide: Ribosomal RNA small subunit methyltransferase A (280 aa).

Positions 18, 20, 45, 66, 89, and 110 each coordinate S-adenosyl-L-methionine.

Belongs to the class I-like SAM-binding methyltransferase superfamily. rRNA adenine N(6)-methyltransferase family. RsmA subfamily.

Its subcellular location is the cytoplasm. It carries out the reaction adenosine(1518)/adenosine(1519) in 16S rRNA + 4 S-adenosyl-L-methionine = N(6)-dimethyladenosine(1518)/N(6)-dimethyladenosine(1519) in 16S rRNA + 4 S-adenosyl-L-homocysteine + 4 H(+). In terms of biological role, specifically dimethylates two adjacent adenosines (A1518 and A1519) in the loop of a conserved hairpin near the 3'-end of 16S rRNA in the 30S particle. May play a critical role in biogenesis of 30S subunits. The polypeptide is Ribosomal RNA small subunit methyltransferase A (Cupriavidus necator (strain ATCC 17699 / DSM 428 / KCTC 22496 / NCIMB 10442 / H16 / Stanier 337) (Ralstonia eutropha)).